The sequence spans 1342 residues: DNA-directed RNA polymerase subunit beta (1342 aa).

This sequence belongs to the RNA polymerase beta chain family. In terms of assembly, the RNAP catalytic core consists of 2 alpha, 1 beta, 1 beta' and 1 omega subunit. When a sigma factor is associated with the core the holoenzyme is formed, which can initiate transcription.

The catalysed reaction is RNA(n) + a ribonucleoside 5'-triphosphate = RNA(n+1) + diphosphate. DNA-dependent RNA polymerase catalyzes the transcription of DNA into RNA using the four ribonucleoside triphosphates as substrates. The protein is DNA-directed RNA polymerase subunit beta of Sodalis glossinidius (strain morsitans).